The primary structure comprises 80 residues: MSFEVFEKLESKVQQALDTITLLQMEIEELKEKNDALNQEVQGARESREALVRENEELKQEQSSWQERLRALLGKMEDVQ.

The stretch at 3-80 (FEVFEKLESK…ALLGKMEDVQ (78 aa)) forms a coiled coil.

It belongs to the ZapB family. Homodimer. The ends of the coiled-coil dimer bind to each other, forming polymers. Interacts with FtsZ.

The protein resides in the cytoplasm. In terms of biological role, non-essential, abundant cell division factor that is required for proper Z-ring formation. It is recruited early to the divisome by direct interaction with FtsZ, stimulating Z-ring assembly and thereby promoting cell division earlier in the cell cycle. Its recruitment to the Z-ring requires functional FtsA or ZipA. In Proteus mirabilis (strain HI4320), this protein is Cell division protein ZapB.